Consider the following 536-residue polypeptide: Adenine deaminase (536 aa).

The disordered stretch occupies residues 1-24 (MTPSPHDLLHCGMNSQDRDETNGD).

The protein belongs to the metallo-dependent hydrolases superfamily. Adenine deaminase family. Requires Mn(2+) as cofactor.

The catalysed reaction is adenine + H2O + H(+) = hypoxanthine + NH4(+). The chain is Adenine deaminase from Deinococcus radiodurans (strain ATCC 13939 / DSM 20539 / JCM 16871 / CCUG 27074 / LMG 4051 / NBRC 15346 / NCIMB 9279 / VKM B-1422 / R1).